The chain runs to 62 residues: Large ribosomal subunit protein bL28 (62 aa).

This sequence belongs to the bacterial ribosomal protein bL28 family.

The chain is Large ribosomal subunit protein bL28 from Acidothermus cellulolyticus (strain ATCC 43068 / DSM 8971 / 11B).